A 313-amino-acid chain; its full sequence is Putative S-adenosyl-L-methionine-dependent methyltransferase MAV_5150 (313 aa).

S-adenosyl-L-methionine contacts are provided by residues Asp139 and 168-169; that span reads DL.

This sequence belongs to the UPF0677 family.

Its function is as follows. Exhibits S-adenosyl-L-methionine-dependent methyltransferase activity. The chain is Putative S-adenosyl-L-methionine-dependent methyltransferase MAV_5150 from Mycobacterium avium (strain 104).